Reading from the N-terminus, the 111-residue chain is Large ribosomal subunit protein uL24 (111 aa).

A compositionally biased stretch (basic and acidic residues) spans 48 to 65; that stretch reads EKPSRSNREGGRTEREAP. The segment at 48-111 is disordered; it reads EKPSRSNREG…AKTTGEELDD (64 aa). Residues 69-80 are compositionally biased toward polar residues; that stretch reads SNVNPIDSNGES. The segment covering 86 to 95 has biased composition (basic and acidic residues); that stretch reads KKVEDPDTGR.

It belongs to the universal ribosomal protein uL24 family. In terms of assembly, part of the 50S ribosomal subunit.

Functionally, one of two assembly initiator proteins, it binds directly to the 5'-end of the 23S rRNA, where it nucleates assembly of the 50S subunit. One of the proteins that surrounds the polypeptide exit tunnel on the outside of the subunit. This is Large ribosomal subunit protein uL24 from Salinibacter ruber (strain DSM 13855 / M31).